Here is a 393-residue protein sequence, read N- to C-terminus: Dual specificity mitogen-activated protein kinase kinase 1 (393 aa).

A disordered region spans residues methionine 1–glutamate 27. The Protein kinase domain occupies phenylalanine 68–isoleucine 361. ATP-binding positions include leucine 74 to valine 82, lysine 97, methionine 143 to methionine 146, and serine 150 to glutamine 153. Lysine 97 is a U0126 binding site. Glutamate 144–methionine 146 is a binding site for K-252a. Aspartate 190 acts as the Proton acceptor in catalysis. ATP contacts are provided by residues lysine 192–asparagine 195 and aspartate 208. Serine 194 serves as a coordination point for K-252a. A U0126-binding site is contributed by aspartate 208 to valine 211. A phosphoserine; by BRAF and RAF1 mark is found at serine 218 and serine 222. The tract at residues glutamate 270 to proline 307 is RAF1-binding. Residue threonine 286 is modified to Phosphothreonine. Threonine 292 is subject to Phosphothreonine; by MAPK1. Phosphoserine; by PAK is present on serine 298.

The protein belongs to the protein kinase superfamily. STE Ser/Thr protein kinase family. MAP kinase kinase subfamily. Found in a complex with at least BRAF, HRAS, MAP2K1, MAPK3/ERK1 and RGS14. Forms a heterodimer with MAP2K2/MEK2. Forms heterodimers with KSR2 which further dimerize to form tetramers. Interacts with KSR1 or KSR2 and BRAF; the interaction with KSR1 or KSR2 mediates KSR1-BRAF or KSR2-BRAF dimerization. Interacts with ARBB2, LAMTOR3 and RAF1. Interacts with MAPK1/ERK2. Interacts with MORG1. Interacts with PPARG. Interacts with isoform 1 of VRK2. Interacts with SGK1. Interacts with BIRC6/bruce. Interacts with KAT7; the interaction promotes KAT7 phosphorylation. Interacts with RAF1 and NEK10; the interaction is required for ERK1/2-signaling pathway activation in response to UV irradiation. Interacts with TRAF3IP3. Interacts with MOS. In terms of assembly, (Microbial infection) Interacts with Yersinia YopJ. In terms of processing, phosphorylation at Ser-218 and Ser-222 by MAP kinase kinase kinases (BRAF or MEKK1) positively regulates kinase activity. Also phosphorylated at Thr-292 by MAPK1/ERK2 and at Ser-298 by PAK. MAPK1/ERK2 phosphorylation of Thr-292 occurs in response to cellular adhesion and leads to inhibition of Ser-298 phosphorylation by PAK. Autophosphorylated at Ser-218 and Ser-222, autophosphosphorylation is promoted by NEK10 following UV irradiation. Post-translationally, (Microbial infection) Acetylation by Yersinia YopJ prevents phosphorylation and activation, thus blocking the MAPK signaling pathway. In terms of tissue distribution, widely expressed, with extremely low levels in brain.

The protein localises to the cytoplasm. It is found in the cytoskeleton. It localises to the microtubule organizing center. The protein resides in the centrosome. Its subcellular location is the spindle pole body. The protein localises to the nucleus. It is found in the membrane. The enzyme catalyses L-seryl-[protein] + ATP = O-phospho-L-seryl-[protein] + ADP + H(+). It carries out the reaction L-threonyl-[protein] + ATP = O-phospho-L-threonyl-[protein] + ADP + H(+). It catalyses the reaction L-tyrosyl-[protein] + ATP = O-phospho-L-tyrosyl-[protein] + ADP + H(+). With respect to regulation, ras proteins such as HRAS mediate the activation of RAF proteins such as RAF1 or BRAF which in turn activate extracellular signal-regulated kinases (ERK) through MAPK (mitogen-activated protein kinases) and ERK kinases MAP2K1/MEK1 and MAP2K2/MEK2. Activation occurs through phosphorylation of Ser-218 and Ser-222. MAP2K1/MEK1 binds KSR1 or KSR2 releasing the inhibitory intramolecular interaction between KSR1 or KSR2 protein kinase and N-terminal domains. This allows KSR1 or KSR2 dimerization with BRAF leading to BRAF activation and phosphorylation of MAP2K1. MAP2K1/MEK1 is also the target of negative feed-back regulation by its substrate kinases, such as MAPK1/ERK2. These phosphorylate MAP2K1/MEK1 on Thr-292, thereby facilitating dephosphorylation of the activating residues Ser-218 and Ser-222. Inhibited by serine/threonine phosphatase 2A. Many inhibitors have been identified including pyrrole derivatives, TAK-733 (one of a series of 8-methylpyrido[2,3-d]pyrimidine-4,7(3H,8H)-dione derivatives), CH4987655 and RDEA119/BAY 869766. In terms of biological role, dual specificity protein kinase which acts as an essential component of the MAP kinase signal transduction pathway. Binding of extracellular ligands such as growth factors, cytokines and hormones to their cell-surface receptors activates RAS and this initiates RAF1 activation. RAF1 then further activates the dual-specificity protein kinases MAP2K1/MEK1 and MAP2K2/MEK2. Both MAP2K1/MEK1 and MAP2K2/MEK2 function specifically in the MAPK/ERK cascade, and catalyze the concomitant phosphorylation of a threonine and a tyrosine residue in a Thr-Glu-Tyr sequence located in the extracellular signal-regulated kinases MAPK3/ERK1 and MAPK1/ERK2, leading to their activation and further transduction of the signal within the MAPK/ERK cascade. Activates BRAF in a KSR1 or KSR2-dependent manner; by binding to KSR1 or KSR2 releases the inhibitory intramolecular interaction between KSR1 or KSR2 protein kinase and N-terminal domains which promotes KSR1 or KSR2-BRAF dimerization and BRAF activation. Depending on the cellular context, this pathway mediates diverse biological functions such as cell growth, adhesion, survival and differentiation, predominantly through the regulation of transcription, metabolism and cytoskeletal rearrangements. One target of the MAPK/ERK cascade is peroxisome proliferator-activated receptor gamma (PPARG), a nuclear receptor that promotes differentiation and apoptosis. MAP2K1/MEK1 has been shown to export PPARG from the nucleus. The MAPK/ERK cascade is also involved in the regulation of endosomal dynamics, including lysosome processing and endosome cycling through the perinuclear recycling compartment (PNRC), as well as in the fragmentation of the Golgi apparatus during mitosis. This is Dual specificity mitogen-activated protein kinase kinase 1 from Homo sapiens (Human).